The chain runs to 613 residues: Transcription factor MTB1 (613 aa).

The interval 48 to 130 is JAZ-interaction domain; sequence LQNKLSDLVE…RVLQKLHMLF (83 aa). Disordered stretches follow at residues 256-285 and 391-441; these read EKNEGNNPRLSNSGAVTERTDGNPKIFGHD and AHNV…AERQ. Residues 260 to 270 are compositionally biased toward polar residues; the sequence is GNNPRLSNSGA. Composition is skewed to basic and acidic residues over residues 394-417 and 427-441; these read VESEHSDVEASCKEDRAGPVDEKR and NGREEPLNHVEAERQ. A basic motif; degenerate region spans residues 430-443; that stretch reads EEPLNHVEAERQRR. The bHLH domain occupies 430 to 479; the sequence is EEPLNHVEAERQRREKLNQRFYALRAVVPNISKMDKASLLGDAIAYITEL. The interval 444–479 is helix-loop-helix motif; that stretch reads EKLNQRFYALRAVVPNISKMDKASLLGDAIAYITEL. The interval 490–513 is disordered; that stretch reads RELRLGSTSRDAITSEDSPSSEIQ. The segment covering 495–512 has biased composition (polar residues); the sequence is GSTSRDAITSEDSPSSEI.

As to quaternary structure, interacts with MYC2 (via N-terminus). MTB1 competes with MED25 for binding to MYC2. Interacts (via N-terminus) with JAZ7.

It is found in the nucleus. Its function is as follows. Transcription factor that negatively regulates jasmonate (JA) signaling. Negatively regulates JA-dependent response to wounding, JA-induced expression of defense genes, JA-dependent responses against herbivorous insects, and JA-dependent resistance against Botrytis cinerea infection. Plays a positive role in resistance against the bacterial pathogen Pseudomonas syringae pv tomato DC3000. The chain is Transcription factor MTB1 from Solanum lycopersicum (Tomato).